The sequence spans 1212 residues: Peregrin (1212 aa).

A C2H2-type zinc finger spans residues 21–47 (YECPVETCRKVYKSYSGIEYHLYHYDH). Disordered regions lie at residues 43–87 (YHYD…SPGR) and 118–176 (VVSE…PKLP). Residues 58 to 67 (LRKHKKKGRQ) show a composition bias toward basic residues. The segment at 59–221 (RKHKKKGRQS…VEYDMDEEDY (163 aa)) is interaction with KAT6A and KAT6B. A compositionally biased stretch (low complexity) spans 74 to 85 (QSPSPSEVSQSP). Residues 119 to 130 (VSEDEEAPEEAP) show a composition bias toward acidic residues. S120 carries the post-translational modification Phosphoserine. K147 is modified (N6-acetyllysine). Over residues 148 to 166 (SGKHKNKEKRKDSNHHHHS) the composition is skewed to basic residues. A Phosphoserine modification is found at S237. A PHD-type 1 zinc finger spans residues 272 to 322 (DAVCCICNDGECQNSNVILFCDMCNLAVHQECYGVPYIPEGQWLCRRCLQS). The C2HC pre-PHD-type zinc finger occupies 326-359 (AVDCALCPNKGGAFKQTDDGRWAHVVCALWIPEV). A PHD-type 2 zinc finger spans residues 383-447 (LTCYICKQRG…RKTAYCDIHT (65 aa)). The disordered stretch occupies residues 447–489 (TPPGSARRLPALSHSEGEEEEDEEEDEGKSWSSEKVKKAKAKS). Phosphoserine occurs at positions 459 and 461. Residues 463–473 (GEEEEDEEEDE) show a composition bias toward acidic residues. The interaction with MEAF6 and ING5 stretch occupies residues 500–819 (LAEKRAAAPV…IKKEMTALRR (320 aa)). The interval 542 to 1077 (YWTLKRQSRN…RGAGWLSEDE (536 aa)) is required for RUNX1 and RUNX2 transcriptional activation. N6-acetyllysine is present on K579. In terms of domain architecture, Bromo spans 627–731 (MQLTPFLILL…EQGGAVLRQA (105 aa)). Residues 817–1060 (LRRKLAHQRE…VGTGRGVGHS (244 aa)) are disordered. Basic and acidic residues predominate over residues 823 to 836 (HQRETGRDGPERHG). T856 carries the phosphothreonine modification. Over residues 856–869 (TDSAAEESSSQETS) the composition is skewed to low complexity. Phosphoserine is present on residues S858, S915, S920, and S924. Residues 993-1019 (PRSSSDSESSSSSSSSAASDRTSTTPS) show a composition bias toward low complexity. S1074 carries the phosphoserine modification. In terms of domain architecture, PWWP spans 1083 to 1166 (ALDLVWAKCR…RTKLVPLGVN (84 aa)). At S1185 the chain carries Phosphoserine.

In terms of assembly, component of some HBO1 complex composed of KAT7/HBO1, MEAF6, ING5, and BRPF1. Component of the MOZ/MORF complex composed at least of ING5, KAT6A, KAT6B, MEAF6 and one of BRPF1, BRD1/BRPF2 and BRPF3. Interacts (via PHD-type zinc finger domains) with unmethylated histone H3 at 'Lys-4' (H3K4me0). Interacts with trimethylated 'Lys-36' of histone H3 (H3K36me3). Interacts with ING5; interaction directs BRPF1 to H4K4me3-enriched chromatin at the 5' of active genes. Interacts with KAT7. Post-translationally, acetylated by KAT6A. In terms of tissue distribution, expressed at low level in most tissues, with high expression in the testis and specific regions of the brain.

The protein localises to the nucleus. The protein resides in the chromosome. It localises to the cytoplasm. Functionally, scaffold subunit of various histone acetyltransferase (HAT) complexes, such as the MOZ/MORF and HBO1 complexes, which have a histone H3 acetyltransferase activity. Plays a key role in HBO1 complex by directing KAT7/HBO1 specificity towards histone H3 'Lys-14' acetylation (H3K14ac). Some HAT complexes preferentially mediate histone H3 'Lys-23' (H3K23ac) acetylation. Positively regulates the transcription of RUNX1 and RUNX2. The polypeptide is Peregrin (Mus musculus (Mouse)).